A 137-amino-acid chain; its full sequence is Putative pre-16S rRNA nuclease (137 aa).

Belongs to the YqgF nuclease family.

The protein localises to the cytoplasm. Its function is as follows. Could be a nuclease involved in processing of the 5'-end of pre-16S rRNA. This Actinobacillus pleuropneumoniae serotype 5b (strain L20) protein is Putative pre-16S rRNA nuclease.